Here is a 263-residue protein sequence, read N- to C-terminus: Tryptophan 2,3-dioxygenase (263 aa).

Substrate contacts are provided by residues 32–36 (FIVIH), tyrosine 94, and arginine 98. Histidine 221 contacts heme. Threonine 235 lines the substrate pocket.

Belongs to the tryptophan 2,3-dioxygenase family. As to quaternary structure, homotetramer. Requires heme as cofactor.

It carries out the reaction L-tryptophan + O2 = N-formyl-L-kynurenine. Its pathway is amino-acid degradation; L-tryptophan degradation via kynurenine pathway; L-kynurenine from L-tryptophan: step 1/2. Heme-dependent dioxygenase that catalyzes the oxidative cleavage of the L-tryptophan (L-Trp) pyrrole ring and converts L-tryptophan to N-formyl-L-kynurenine. Catalyzes the oxidative cleavage of the indole moiety. In Caulobacter vibrioides (strain ATCC 19089 / CIP 103742 / CB 15) (Caulobacter crescentus), this protein is Tryptophan 2,3-dioxygenase.